The following is a 314-amino-acid chain: MKIILANPRGFCAGVDRAISIVELALEIHGAPIYVRHEVVHNRFVVNGLRERGAIFVEELDEVPNGAIVIFSAHGVSQAVRQEAKERNLKVFDATCPLVTKVHMQVARASRKGTKAILIGHEGHPEVIGTMGQYDNDKGGIYLVEDVEDIAKLTLRNDEDITFMTQTTLSIDDTAGVIEVLKQKYPAIQGPRKNDICYATTNRQQAVRELAKLSDLVIVVGSKNSSNSNRLAELASRMGVTAKLIDDANDIEVSWLDNVTVIGLTAGASAPEILVQSVISRLKELGVDKVEELEGCEENTVFEVPKELRIKEVE.

Cys-12 contacts [4Fe-4S] cluster. Residues His-41 and His-74 each coordinate (2E)-4-hydroxy-3-methylbut-2-enyl diphosphate. Dimethylallyl diphosphate-binding residues include His-41 and His-74. Residues His-41 and His-74 each contribute to the isopentenyl diphosphate site. Cys-96 is a [4Fe-4S] cluster binding site. His-124 is a (2E)-4-hydroxy-3-methylbut-2-enyl diphosphate binding site. Residue His-124 participates in dimethylallyl diphosphate binding. An isopentenyl diphosphate-binding site is contributed by His-124. Glu-126 functions as the Proton donor in the catalytic mechanism. Thr-167 contacts (2E)-4-hydroxy-3-methylbut-2-enyl diphosphate. Cys-197 provides a ligand contact to [4Fe-4S] cluster. (2E)-4-hydroxy-3-methylbut-2-enyl diphosphate is bound by residues Ser-225, Ser-226, Asn-227, and Ser-269. Residues Ser-225, Ser-226, Asn-227, and Ser-269 each coordinate dimethylallyl diphosphate. The isopentenyl diphosphate site is built by Ser-225, Ser-226, Asn-227, and Ser-269.

It belongs to the IspH family. Requires [4Fe-4S] cluster as cofactor.

The catalysed reaction is isopentenyl diphosphate + 2 oxidized [2Fe-2S]-[ferredoxin] + H2O = (2E)-4-hydroxy-3-methylbut-2-enyl diphosphate + 2 reduced [2Fe-2S]-[ferredoxin] + 2 H(+). It catalyses the reaction dimethylallyl diphosphate + 2 oxidized [2Fe-2S]-[ferredoxin] + H2O = (2E)-4-hydroxy-3-methylbut-2-enyl diphosphate + 2 reduced [2Fe-2S]-[ferredoxin] + 2 H(+). It functions in the pathway isoprenoid biosynthesis; dimethylallyl diphosphate biosynthesis; dimethylallyl diphosphate from (2E)-4-hydroxy-3-methylbutenyl diphosphate: step 1/1. Its pathway is isoprenoid biosynthesis; isopentenyl diphosphate biosynthesis via DXP pathway; isopentenyl diphosphate from 1-deoxy-D-xylulose 5-phosphate: step 6/6. Catalyzes the conversion of 1-hydroxy-2-methyl-2-(E)-butenyl 4-diphosphate (HMBPP) into a mixture of isopentenyl diphosphate (IPP) and dimethylallyl diphosphate (DMAPP). Acts in the terminal step of the DOXP/MEP pathway for isoprenoid precursor biosynthesis. This Histophilus somni (strain 2336) (Haemophilus somnus) protein is 4-hydroxy-3-methylbut-2-enyl diphosphate reductase.